We begin with the raw amino-acid sequence, 290 residues long: Nucleotide-binding protein Xfasm12_0753 (290 aa).

13-20 (GLSGSGKS) lines the ATP pocket. 65–68 (DIRS) lines the GTP pocket.

The protein belongs to the RapZ-like family.

Its function is as follows. Displays ATPase and GTPase activities. In Xylella fastidiosa (strain M12), this protein is Nucleotide-binding protein Xfasm12_0753.